Consider the following 297-residue polypeptide: Urease accessory protein UreD (297 aa).

Belongs to the UreD family. In terms of assembly, ureD, UreF and UreG form a complex that acts as a GTP-hydrolysis-dependent molecular chaperone, activating the urease apoprotein by helping to assemble the nickel containing metallocenter of UreC. The UreE protein probably delivers the nickel.

Its subcellular location is the cytoplasm. Required for maturation of urease via the functional incorporation of the urease nickel metallocenter. The protein is Urease accessory protein UreD of Prochlorococcus marinus subsp. pastoris (strain CCMP1986 / NIES-2087 / MED4).